Reading from the N-terminus, the 516-residue chain is Lipid II flippase MurJ (516 aa).

11 helical membrane passes run 93–113, 133–153, 159–179, 188–208, 233–253, 275–295, 317–337, 358–378, 390–409, 448–468, and 483–503; these read WALA…VFAV, IMFP…VLNT, LPAF…VFVA, ALAW…LPGL, VLAK…SLII, LMEF…LPSL, VTFL…TPLT, LATY…APGF, IAIG…VPLI, FFVQ…WCAI, and IALM…MLWV.

This sequence belongs to the MurJ/MviN family.

It localises to the cell inner membrane. It participates in cell wall biogenesis; peptidoglycan biosynthesis. In terms of biological role, involved in peptidoglycan biosynthesis. Transports lipid-linked peptidoglycan precursors from the inner to the outer leaflet of the cytoplasmic membrane. The sequence is that of Lipid II flippase MurJ from Burkholderia cenocepacia (strain ATCC BAA-245 / DSM 16553 / LMG 16656 / NCTC 13227 / J2315 / CF5610) (Burkholderia cepacia (strain J2315)).